The following is a 1433-amino-acid chain: Pleckstrin homology domain-containing family H member 1 (1433 aa).

The stretch at 40 to 174 (NIRHLLAERM…QILMLQDKLQ (135 aa)) forms a coiled coil. Disordered stretches follow at residues 247–346 (DKAD…LSPP) and 552–634 (SSVP…TSSY). The segment covering 252 to 266 (PKSSQDGVDATSTVK) has biased composition (polar residues). Positions 279–299 (MRDRAMGGASDRDHSSDELNS) are enriched in basic and acidic residues. Residues 308–318 (SSSSSSSSSSS) are compositionally biased toward low complexity. The segment covering 332–343 (TPTPKSPPPVSL) has biased composition (pro residues). Over residues 557-567 (PDDDSGSEDDS) the composition is skewed to acidic residues. Residues 568–578 (SSLASLHTSTL) are compositionally biased toward low complexity. Residues 597-606 (VSTSSISSES) are compositionally biased toward polar residues. 2 consecutive PH domains span residues 643–737 (TLEK…NVLK) and 751–859 (KPTA…VAAG). The region spanning 896-1050 (FSKEGLRYPL…PSRMEILSIL (155 aa)) is the MyTH4 domain. The 332-residue stretch at 1061–1392 (FSIPVHFMNN…SYINYWTSSL (332 aa)) folds into the FERM domain.

Functionally, critical component of the guidance pathway underlying endothelial cell migration and blood vessel patterning. Involved in mediating membrane localization of ephrin proteins, which have been shown to provide guidance cues for endothelial cell migration. The chain is Pleckstrin homology domain-containing family H member 1 (plekhh1) from Danio rerio (Zebrafish).